The following is a 1194-amino-acid chain: Pre-mRNA-processing ATP-dependent RNA helicase prp-5 (1194 aa).

Disordered regions lie at residues 1–201 (MARL…KEAK), 224–248 (AVVG…ASPA), and 452–484 (ASGE…DDYG). 2 stretches are compositionally biased toward basic and acidic residues: residues 21 to 37 (RKDD…GPVD) and 44 to 154 (SPID…RDQP). Residues 156-176 (PGNTTAKENEPAKSTPTQPQT) show a composition bias toward polar residues. Residues 177–186 (EAEKKAERLR) show a composition bias toward basic and acidic residues. Low complexity predominate over residues 232 to 248 (SPAPASPAAAESPASPA). Over residues 455–469 (EESHSKADTLTEKKN) the composition is skewed to basic and acidic residues. Residues 561–589 (QKWSQCGLTRPILDTIESLGFEKPTPIQM) carry the Q motif motif. Positions 592 to 770 (LPVIMSGRDV…KKVLRDPVEI (179 aa)) constitute a Helicase ATP-binding domain. ATP is bound at residue 605–612 (AKTGSGKT). Positions 718–721 (DEAD) match the DEAD box motif. Residues 797-945 (RLLELLGELY…PVPDRLNEMR (149 aa)) enclose the Helicase C-terminal domain. 2 disordered regions span residues 952 to 1011 (VKAG…DKTK) and 1025 to 1056 (DASK…SGGA). Basic and acidic residues-rich tracts occupy residues 967 to 980 (GLEK…AARM), 997 to 1011 (EDAP…DKTK), and 1025 to 1036 (DASKAETEDKHA).

The protein belongs to the DEAD box helicase family. DDX46/PRP5 subfamily.

It localises to the nucleus. It catalyses the reaction ATP + H2O = ADP + phosphate + H(+). Its function is as follows. ATP-dependent RNA helicase involved spliceosome assembly and in nuclear splicing. Catalyzes an ATP-dependent conformational change of U2 snRNP. Bridges U1 and U2 snRNPs and enables stable U2 snRNP association with intron RNA. This Neurospora crassa (strain ATCC 24698 / 74-OR23-1A / CBS 708.71 / DSM 1257 / FGSC 987) protein is Pre-mRNA-processing ATP-dependent RNA helicase prp-5 (prp-5).